The following is a 288-amino-acid chain: Acetyl-coenzyme A carboxylase carboxyl transferase subunit beta (288 aa).

The CoA carboxyltransferase N-terminal domain maps to 32-288 (MWAKCPSCKR…LRLHSLEGWR (257 aa)). Zn(2+) is bound by residues Cys36, Cys39, Cys54, and Cys57. A C4-type zinc finger spans residues 36–57 (CPSCKRTLYTKEMGAEKICPHC).

This sequence belongs to the AccD/PCCB family. As to quaternary structure, acetyl-CoA carboxylase is a heterohexamer composed of biotin carboxyl carrier protein (AccB), biotin carboxylase (AccC) and two subunits each of ACCase subunit alpha (AccA) and ACCase subunit beta (AccD). The cofactor is Zn(2+).

Its subcellular location is the cytoplasm. It catalyses the reaction N(6)-carboxybiotinyl-L-lysyl-[protein] + acetyl-CoA = N(6)-biotinyl-L-lysyl-[protein] + malonyl-CoA. Its pathway is lipid metabolism; malonyl-CoA biosynthesis; malonyl-CoA from acetyl-CoA: step 1/1. Its function is as follows. Component of the acetyl coenzyme A carboxylase (ACC) complex. Biotin carboxylase (BC) catalyzes the carboxylation of biotin on its carrier protein (BCCP) and then the CO(2) group is transferred by the transcarboxylase to acetyl-CoA to form malonyl-CoA. The chain is Acetyl-coenzyme A carboxylase carboxyl transferase subunit beta from Enterococcus faecalis (strain ATCC 700802 / V583).